The following is a 256-amino-acid chain: Putative adhesin P1-like protein MPN_132 (256 aa).

Over residues 56-72 the composition is skewed to low complexity; the sequence is AVSESQAATSSTTTTAT. Disordered regions lie at residues 56–115 and 149–235; these read AVSE…PYLH and FGTD…EVVG. Positions 96–112 are enriched in polar residues; it reads KASTQGSGQTNSQNTSP. Composition is skewed to low complexity over residues 155–179 and 211–222; these read TQPQ…LGSV and STSDGNTSSTNN.

The protein belongs to the adhesin P1 family.

This Mycoplasma pneumoniae (strain ATCC 29342 / M129 / Subtype 1) (Mycoplasmoides pneumoniae) protein is Putative adhesin P1-like protein MPN_132.